Reading from the N-terminus, the 544-residue chain is Inosine-5'-monophosphate dehydrogenase (544 aa).

CBS domains are found at residues 132–192 (FITD…PIKS) and 194–250 (MTTE…PYAS). NAD(+)-binding positions include 288–290 (DSS) and 338–340 (GMG). Residues glycine 340 and glycine 342 each contribute to the K(+) site. Serine 343 contacts IMP. Cysteine 345 is a K(+) binding site. Cysteine 345 serves as the catalytic Thioimidate intermediate. IMP contacts are provided by residues 378–380 (DGG), 401–402 (GG), and 425–429 (YRGMG). Catalysis depends on arginine 458, which acts as the Proton acceptor. Glutamine 470 contacts IMP. K(+) contacts are provided by glutamate 529, glycine 530, and glycine 531.

It belongs to the IMPDH/GMPR family. Homotetramer. K(+) is required as a cofactor.

It is found in the cytoplasm. It carries out the reaction IMP + NAD(+) + H2O = XMP + NADH + H(+). It functions in the pathway purine metabolism; XMP biosynthesis via de novo pathway; XMP from IMP: step 1/1. Its activity is regulated as follows. Mycophenolic acid (MPA) is a non-competitive inhibitor that prevents formation of the closed enzyme conformation by binding to the same site as the amobile flap. In contrast, mizoribine monophosphate (MZP) is a competitive inhibitor that induces the closed conformation. MPA is a potent inhibitor of mammalian IMPDHs but a poor inhibitor of the bacterial enzymes. MZP is a more potent inhibitor of bacterial IMPDH. Functionally, catalyzes the conversion of inosine 5'-phosphate (IMP) to xanthosine 5'-phosphate (XMP), the first committed and rate-limiting step in the de novo synthesis of guanine nucleotides, and therefore plays an important role in the regulation of cell growth. The sequence is that of Inosine-5'-monophosphate dehydrogenase from Cryptococcus neoformans var. neoformans serotype D (strain JEC21 / ATCC MYA-565) (Filobasidiella neoformans).